The chain runs to 2210 residues: MTAAANWVANGASLEDCHSNLFSLAELTGIKWRRYNFGGHGDCGPIISAPAQDDPILLSFIRCLQANLLCVWRRDVKPDCKELWIFWWGDEPNLVGVIHHELQVVEEGLWENGLSYECRTLLFKAIHNLLERCLMDKNFVRIGKWFVRPYEKDEKPVNKSEHLSCAFTFFLHGESNVCTSVEIAQHQPIYLINEEHIHMAQSSPAPFQVLVSPYGLNGTLTGQAYKMSDPATRKLIEEWQYFYPMVLKKKEESKEEDELGYDDDFPVAVEVIVGGVRMVYPSAFVLISQNDIPVPQSVASAGGHIAVGQQGLGSVKDPSNCGMPLTPPTSPEQAILGESGGMQSAASHLVSQDGGMITMHSPKRSGKIPPKLHNHMVHRVWKECILNRTQSKRSQMSTPTLEEEPASNPATWDFVDPTQRVSCSCSRHKLLKRCAVGPNRPPTVSQPGFSAGPSSSSSLPPPASSKHKTAERQEKGDKLQKRPLIPFHHRPSVAEELCMEQDTPGQKLGLAGIDSSLEVSSSRKYDKQMAVPSRNTSKQMNLNPMDSPHSPISPLPPTLSPQPRGQETESLDPPSVPVNPALYGNGLELQQLSTLDDRTVLVGQRLPLMAEVSETALYCGIRPSNPESSEKWWHSYRLPPSDDAEFRPPELQGERCDAKMEVNSESTALQRLLAQPNKRFKIWQDKQPQLQPLHFLDPLPLSQQPGDSLGEVNDPYTFEDGDIKYIFTANKKCKQGTEKDSLKKNKSEDGFGTKDVTTPGHSTPVPDGKNAMSIFSSATKTDVRQDNAAGRAGSSSLTQVTDLAPSLHDLDNIFDNSDDDELGAVSPALRSSKMPAVGTEDRPLGKDGRAAVPYPPTVADLQRMFPTPPSLEQHPAFSPVMNYKDGISSETVTALGMMESPMVSMVSTQLTEFKMEVEDGLGSPKPEEIKDFSYVHKVPSFQPFVGSSMFAPLKMLPSHCLLPLKIPDACLFRPSWAIPPKIEQLPMPPAATFIRDGYNNVPSVGSLADPDYLNTPQMNTPVTLNSAAPASNSGAGVLPSPATPRFSVPTPRTPRTPRTPRGGGTASGQGSVKYDSTDQGSPASTPSTTRPLNSVEPATMQPIPEAHSLYVTLILSDSVMNIFKDRNFDSCCICACNMNIKGADVGLYIPDSSNEDQYRCTCGFSAIMNRKLGYNSGLFLEDELDIFGKNSDIGQAAERRLMMCQSTFLPQVEGTKKPQEPPISLLLLLQNQHTQPFASLNFLDYISSNNRQTLPCVSWSYDRVQADNNDYWTECFNALEQGRQYVDNPTGGKVDEALVRSATVHSWPHSNVLDISMLSSQDVVRMLLSLQPFLQDAIQKKRTGRTWENIQHVQGPLTWQQFHKMAGRGTYGSEESPEPLPIPTLLVGYDKDFLTISPFSLPFWERLLLDPYGGHRDVAYIVVCPENEALLEGAKTFFRDLSAVYEMCRLGQHKPICKVLRDGIMRVGKTVAQKLTDELVSEWFNQPWSGEENDNHSRLKLYAQVCRHHLAPYLATLQLDSSLLIPPKYQTPPAAAQGQATPGNAGPLAPNGSAAPPAGSAFNPTSNSSSTNPAASSSASGSSVPPVSSSASAPGISQISTTSSSGFSGSVGGQNPSTGGISADRTQGNIGCGGDTDPGQSSSQPSQDGQESVTERERIGIPTEPDSADSHAHPPAVVIYMVDPFTYAAEEDSTSGNFWLLSLMRCYTEMLDNLPEHMRNSFILQIVPCQYMLQTMKDEQVFYIQYLKSMAFSVYCQCRRPLPTQIHIKSLTGFGPAASIEMTLKNPERPSPIQLYSPPFILAPIKDKQTELGETFGEASQKYNVLFVGYCLSHDQRWLLASCTDLHGELLETCVVNIALPNRSRRSKVSARKIGLQKLWEWCIGIVQMTSLPWRVVIGRLGRLGHGELKDWSILLGECSLQTISKKLKDVCRMCGISAADSPSILSACLVAMEPQGSFVVMPDAVTMGSVFGRSTALNMQSSQLNTPQDASCTHILVFPTSSTIQVAPANYPNEDGFSPNNDDMFVDLPFPDDMDNDIGILMTGNLHSSPNSSPVPSPGSPSGIGVGSHFQHSRSQGERLLSREAPEELKQQPLALGYFVSTAKAENLPQWFWSSCPQAQNQCPLFLKASLHHHISVAQTDELLPARNSQRVPHPLDSKTTSDVLRFVLEQYNALSWLTCNPATQDRTSCLPVHFVVLTQLYNAIMNIL.

Polar residues predominate over residues 391-400 (SKRSQMSTPT). 3 disordered regions span residues 391-414 (SKRSQMSTPTLEEEPASNPATWDF), 435-489 (AVGP…PFHH), and 519-582 (VSSS…NPAL). Over residues 445–458 (SQPGFSAGPSSSSS) the composition is skewed to low complexity. The segment covering 468–480 (KTAERQEKGDKLQ) has biased composition (basic and acidic residues). The segment covering 533–544 (SRNTSKQMNLNP) has biased composition (polar residues). The span at 551–560 (PISPLPPTLS) shows a compositional bias: pro residues. Ser553 and Ser560 each carry phosphoserine. The LXXLL motif 1 signature appears at 669-673 (LQRLL). The segment covering 736 to 752 (GTEKDSLKKNKSEDGFG) has biased composition (basic and acidic residues). Residues 736–770 (GTEKDSLKKNKSEDGFGTKDVTTPGHSTPVPDGKN) form a disordered region. 3 positions are modified to phosphoserine: Ser817, Ser826, and Ser923. The disordered stretch occupies residues 1016–1096 (PQMNTPVTLN…STTRPLNSVE (81 aa)). Positions 1025–1036 (NSAAPASNSGAG) are enriched in low complexity. Polar residues predominate over residues 1077 to 1092 (TDQGSPASTPSTTRPL). The LXXLL motif 2 signature appears at 1225-1229 (LLLLL). Residues 1380-1401 (LPIPTLLVGYDKDFLTISPFSL) form a leucine-zipper region. Disordered stretches follow at residues 1530 to 1656 (QTPP…VTER) and 2045 to 2080 (GNLHSSPNSSPVPSPGSPSGIGVGSHFQHSRSQGER). Positions 1531–1608 (TPPAAAQGQA…ISTTSSSGFS (78 aa)) are enriched in low complexity. The segment covering 1615 to 1629 (NPSTGGISADRTQGN) has biased composition (polar residues). Over residues 1637-1650 (DPGQSSSQPSQDGQ) the composition is skewed to low complexity. Ser2083 is modified (phosphoserine).

The protein belongs to the Mediator complex subunit 13 family. Component of the Mediator complex, which is composed of MED1, MED4, MED6, MED7, MED8, MED9, MED10, MED11, MED12, MED13, MED13L, MED14, MED15, MED16, MED17, MED18, MED19, MED20, MED21, MED22, MED23, MED24, MED25, MED26, MED27, MED29, MED30, MED31, CCNC, CDK8 and CDC2L6/CDK11. The MED12, MED13, CCNC and CDK8 subunits form a distinct module termed the CDK8 module. Mediator containing the CDK8 module is less active than Mediator lacking this module in supporting transcriptional activation. Individual preparations of the Mediator complex lacking one or more distinct subunits have been variously termed ARC, CRSP, DRIP, PC2, SMCC and TRAP. As to expression, highly expressed in brain (cerebellum), heart (aorta), skeletal muscle, kidney, placenta and peripheral blood leukocytes. Highly expressed in fetal brain.

It localises to the nucleus. Functionally, component of the Mediator complex, a coactivator involved in the regulated transcription of nearly all RNA polymerase II-dependent genes. Mediator functions as a bridge to convey information from gene-specific regulatory proteins to the basal RNA polymerase II transcription machinery. Mediator is recruited to promoters by direct interactions with regulatory proteins and serves as a scaffold for the assembly of a functional preinitiation complex with RNA polymerase II and the general transcription factors. This subunit may specifically regulate transcription of targets of the Wnt signaling pathway and SHH signaling pathway. This is Mediator of RNA polymerase II transcription subunit 13-like (MED13L) from Homo sapiens (Human).